The following is a 251-amino-acid chain: 1-(5-phosphoribosyl)-5-[(5-phosphoribosylamino)methylideneamino] imidazole-4-carboxamide isomerase (251 aa).

Catalysis depends on Asp-8, which acts as the Proton acceptor. Catalysis depends on Asp-131, which acts as the Proton donor.

The protein belongs to the HisA/HisF family.

The protein resides in the cytoplasm. It carries out the reaction 1-(5-phospho-beta-D-ribosyl)-5-[(5-phospho-beta-D-ribosylamino)methylideneamino]imidazole-4-carboxamide = 5-[(5-phospho-1-deoxy-D-ribulos-1-ylimino)methylamino]-1-(5-phospho-beta-D-ribosyl)imidazole-4-carboxamide. The protein operates within amino-acid biosynthesis; L-histidine biosynthesis; L-histidine from 5-phospho-alpha-D-ribose 1-diphosphate: step 4/9. The sequence is that of 1-(5-phosphoribosyl)-5-[(5-phosphoribosylamino)methylideneamino] imidazole-4-carboxamide isomerase from Burkholderia vietnamiensis (strain G4 / LMG 22486) (Burkholderia cepacia (strain R1808)).